We begin with the raw amino-acid sequence, 701 residues long: MSGRAIGTETEWWVPGRVEIDDVAPVVSCGVYPAKAVVGEVVPVSAAVWREGHEAVAATLVVRYLGVRYPHLTDRPRARVLPTPSEPQQRVKPLLIPMTSGQEPFVFHGQFTPDRVGLWTFRVDGWGDPIHTWRHGLIAKLDAGQGETELSNDLLVGAVLLERAATGVPRGLRDPLLAAAAALRTPGDPVTRTALALTPEIEELLADYPLRDLVTRGEQFGVWVDRPLARFGAWYEMFPRSTGGWDDDGNPVHGTFATAAAELPRIAGMGFDVVYLPPIHPIGKVHRKGRNNSPTAAPTDVGSPWAIGSDEGGHDTVHPSLGTIDDFDDFVSAARDLGMEVALDLALQCAPDHPWAREHRQWFTELPDGTIAYAENPPKKYQDIYPLNFDNDPEGLYDEVLRVVQHWVNHGVKFFRVDNPHTKPPNFWAWLIAQVKTVDPDVLFLSEAFTPPARQYGLAKLGFTQSYSYFTWRTTKWELTEFGNQIAELADYRRPNLFVNTPDILHAVLQHNGPGMFAIRAVLAATMSPAWGMYCGYELFEHRAVREGSEEYLDSEKYELRPRDFASALDQGRSLQPFITRLNIIRRLHPAFQQLRTIHFHHVDNDALLAYSKFDPATGDCVLVVVTLNAFGPEEATLWLDMAALGMEDYDRFWVRDEITGEEYQWGQANYIRIDPARAVAHIINMPAVPYESRNTLLRRR.

The interval 286–317 (HRKGRNNSPTAAPTDVGSPWAIGSDEGGHDTV) is disordered. The alpha-maltose 1-phosphate site is built by K288, Q348, and D383. Residue D418 is the Nucleophile of the active site. N419 is an alpha-maltose 1-phosphate binding site. The active-site Proton donor is E447. An alpha-maltose 1-phosphate-binding site is contributed by 557–558 (KY).

This sequence belongs to the glycosyl hydrolase 13 family. GlgE subfamily. As to quaternary structure, homodimer.

The enzyme catalyses alpha-maltose 1-phosphate + [(1-&gt;4)-alpha-D-glucosyl](n) = [(1-&gt;4)-alpha-D-glucosyl](n+2) + phosphate. Its pathway is glycan biosynthesis; glycogen biosynthesis. Its function is as follows. Essential maltosyltransferase that uses maltose 1-phosphate (M1P) as the sugar donor to elongate linear or branched alpha-(1-&gt;4)-glucans. Maltooligosaccharides with a degree of polymerization (DP) superior or equal to 4 are efficient acceptors, with DP5 being optimal in the GlgE-catalyzed polymerization with M1P. Is specific for the alpha-anomer of M1P as substrate, since the beta-anomer of M1P gives no activity. Exhibits an alpha-retaining catalytic mechanism. Is also able to catalyze the reverse reaction in vitro, releasing M1P from glycogen in the presence of inorganic phosphate. Also catalyzes disproportionation reactions through maltosyl transfer between maltooligosaccharides. Is involved in a branched alpha-glucan biosynthetic pathway from trehalose, together with TreS, Mak and GlgB. This chain is Alpha-1,4-glucan:maltose-1-phosphate maltosyltransferase (glgE), found in Mycobacterium tuberculosis (strain CDC 1551 / Oshkosh).